The following is a 210-amino-acid chain: Protein-L-isoaspartate O-methyltransferase (210 aa).

Serine 52 is a catalytic residue.

Belongs to the methyltransferase superfamily. L-isoaspartyl/D-aspartyl protein methyltransferase family.

It is found in the cytoplasm. It catalyses the reaction [protein]-L-isoaspartate + S-adenosyl-L-methionine = [protein]-L-isoaspartate alpha-methyl ester + S-adenosyl-L-homocysteine. In terms of biological role, catalyzes the methyl esterification of L-isoaspartyl residues in peptides and proteins that result from spontaneous decomposition of normal L-aspartyl and L-asparaginyl residues. It plays a role in the repair and/or degradation of damaged proteins. The sequence is that of Protein-L-isoaspartate O-methyltransferase from Protochlamydia amoebophila (strain UWE25).